The following is a 284-amino-acid chain: Bifunctional protein FolD (284 aa).

Residue glycine 166 to serine 168 participates in NADP(+) binding.

This sequence belongs to the tetrahydrofolate dehydrogenase/cyclohydrolase family. In terms of assembly, homodimer.

It catalyses the reaction (6R)-5,10-methylene-5,6,7,8-tetrahydrofolate + NADP(+) = (6R)-5,10-methenyltetrahydrofolate + NADPH. It carries out the reaction (6R)-5,10-methenyltetrahydrofolate + H2O = (6R)-10-formyltetrahydrofolate + H(+). Its pathway is one-carbon metabolism; tetrahydrofolate interconversion. Its function is as follows. Catalyzes the oxidation of 5,10-methylenetetrahydrofolate to 5,10-methenyltetrahydrofolate and then the hydrolysis of 5,10-methenyltetrahydrofolate to 10-formyltetrahydrofolate. In Nitrosococcus oceani (strain ATCC 19707 / BCRC 17464 / JCM 30415 / NCIMB 11848 / C-107), this protein is Bifunctional protein FolD.